The following is a 489-amino-acid chain: Coiled-coil domain-containing protein 77 (489 aa).

The residue at position 38 (Ser38) is a Phosphoserine. 2 coiled-coil regions span residues 57–120 (SQEL…QVCL) and 212–487 (ERHQ…NALR).

This Mus musculus (Mouse) protein is Coiled-coil domain-containing protein 77 (Ccdc77).